The following is a 647-amino-acid chain: Threonine--tRNA ligase (647 aa).

Residues 1-61 (MIKITFPDGA…EEDGSIEIVT (61 aa)) form the TGS domain. Positions 240–538 (DHRKLGKELD…LIETYKGAFP (299 aa)) are catalytic. Cysteine 334, histidine 385, and histidine 515 together coordinate Zn(2+).

The protein belongs to the class-II aminoacyl-tRNA synthetase family. In terms of assembly, homodimer. Zn(2+) serves as cofactor.

It localises to the cytoplasm. The enzyme catalyses tRNA(Thr) + L-threonine + ATP = L-threonyl-tRNA(Thr) + AMP + diphosphate + H(+). Its function is as follows. Catalyzes the attachment of threonine to tRNA(Thr) in a two-step reaction: L-threonine is first activated by ATP to form Thr-AMP and then transferred to the acceptor end of tRNA(Thr). Also edits incorrectly charged L-seryl-tRNA(Thr). The protein is Threonine--tRNA ligase of Streptococcus pyogenes serotype M4 (strain MGAS10750).